Reading from the N-terminus, the 190-residue chain is Nucleoside triphosphate pyrophosphatase (190 aa).

D69 functions as the Proton acceptor in the catalytic mechanism.

It belongs to the Maf family. It depends on a divalent metal cation as a cofactor.

Its subcellular location is the cytoplasm. The enzyme catalyses a ribonucleoside 5'-triphosphate + H2O = a ribonucleoside 5'-phosphate + diphosphate + H(+). It catalyses the reaction a 2'-deoxyribonucleoside 5'-triphosphate + H2O = a 2'-deoxyribonucleoside 5'-phosphate + diphosphate + H(+). Nucleoside triphosphate pyrophosphatase. May have a dual role in cell division arrest and in preventing the incorporation of modified nucleotides into cellular nucleic acids. The protein is Nucleoside triphosphate pyrophosphatase of Helicobacter pylori (strain Shi470).